A 375-amino-acid polypeptide reads, in one-letter code: 23S rRNA (uracil(747)-C(5))-methyltransferase RlmC (375 aa).

Residues Cys3, Cys11, Cys14, and Cys87 each contribute to the [4Fe-4S] cluster site. Positions 212, 241, 262, and 307 each coordinate S-adenosyl-L-methionine. Cys334 functions as the Nucleophile in the catalytic mechanism.

It belongs to the class I-like SAM-binding methyltransferase superfamily. RNA M5U methyltransferase family. RlmC subfamily.

The catalysed reaction is uridine(747) in 23S rRNA + S-adenosyl-L-methionine = 5-methyluridine(747) in 23S rRNA + S-adenosyl-L-homocysteine + H(+). In terms of biological role, catalyzes the formation of 5-methyl-uridine at position 747 (m5U747) in 23S rRNA. The sequence is that of 23S rRNA (uracil(747)-C(5))-methyltransferase RlmC from Salmonella agona (strain SL483).